A 256-amino-acid chain; its full sequence is tRNA (guanine-N(7)-)-methyltransferase (256 aa).

The span at 1 to 15 shows a compositional bias: polar residues; that stretch reads MVATGGQAQDQSHNQ. The interval 1–22 is disordered; sequence MVATGGQAQDQSHNQEPGVLCP. Residues G79, 102-103, 137-138, and L157 contribute to the S-adenosyl-L-methionine site; these read EI and NA. D160 is a catalytic residue. S-adenosyl-L-methionine is bound at residue 235–237; the sequence is SEE.

Belongs to the class I-like SAM-binding methyltransferase superfamily. TrmB family.

It is found in the nucleus. The enzyme catalyses guanosine(46) in tRNA + S-adenosyl-L-methionine = N(7)-methylguanosine(46) in tRNA + S-adenosyl-L-homocysteine. Its pathway is tRNA modification; N(7)-methylguanine-tRNA biosynthesis. Its function is as follows. Catalyzes the formation of N(7)-methylguanine at position 46 (m7G46) in tRNA. This chain is tRNA (guanine-N(7)-)-methyltransferase, found in Drosophila yakuba (Fruit fly).